The following is a 455-amino-acid chain: Golgi pH regulator (455 aa).

Helical transmembrane passes span 5 to 25, 46 to 66, 79 to 99, 114 to 134, and 150 to 170; these read IDSS…WLFF, VTFA…LGVL, LCVI…YFIV, CLLW…FPIL, and VGVI…VNCP. N-linked (GlcNAc...) asparagine glycans are attached at residues Asn-180 and Asn-243. The next 4 membrane-spanning stretches (helical) occupy residues 290-310, 343-363, 378-398, and 425-445; these read GYFF…NIVF, ISFI…LITL, VIVL…VLLI, and WFDV…YLAH.

This sequence belongs to the Golgi pH regulator (TC 1.A.38) family. Homotrimer. Interacts with RABL3; the interaction stabilizes GPR89A.

It localises to the golgi apparatus membrane. The catalysed reaction is iodide(out) = iodide(in). The enzyme catalyses chloride(in) = chloride(out). It catalyses the reaction bromide(in) = bromide(out). It carries out the reaction fluoride(in) = fluoride(out). Voltage-gated channel that enables the transfer of monoatomic anions such as iodide, chloride, bromide and fluoride which may function in counter-ion conductance and participates in Golgi acidification. Plays a role in lymphocyte development, probably by acting as a RABL3 effector in hematopoietic cells. In Bos taurus (Bovine), this protein is Golgi pH regulator.